We begin with the raw amino-acid sequence, 851 residues long: Nucleolar RNA helicase 2 (851 aa).

The tract at residues 1 to 260 is disordered; that stretch reads MPGKLRSGAK…IPVEQKEGAF (260 aa). 2 positions are modified to phosphoserine: Ser7 and Ser13. 2 stretches are compositionally biased toward basic and acidic residues: residues 26–42 and 99–113; these read PSEK…KTEE and EPLE…KEII. Position 39 is an N6-acetyllysine (Lys39). Repeat copies occupy residues 117 to 153, 154 to 190, and 191 to 227. Positions 117–227 are 3 X 37 AA tandem repeats; sequence PSEEEADMPK…SPRLKDGLSQ (111 aa). The residue at position 118 (Ser118) is a Phosphoserine. Residues 133–145 show a composition bias toward basic and acidic residues; the sequence is GKEANGDAGEKSP. Lys134 carries the N6-acetyllysine modification. Ser144, Ser155, Ser181, Ser192, Ser218, Ser236, Ser243, Ser244, and Ser245 each carry phosphoserine. A compositionally biased stretch (basic and acidic residues) spans 170–182; the sequence is GKEANGDAGEKSP. The span at 207 to 223 shows a compositional bias: basic and acidic residues; sequence GKEASGDAGEKSPRLKD. Residues 226–237 show a composition bias toward polar residues; it reads SQPSEPKSNSSD. The span at 246–257 shows a compositional bias: basic and acidic residues; sequence ETEKEIPVEQKE. The Q motif signature appears at 258–286; it reads GAFSNFPISEETVKLLKARGVNFLFPIQA. The Helicase ATP-binding domain maps to 289 to 468; it reads FHHVYSGKDL…KKYMKSTYEQ (180 aa). 302–309 contributes to the ATP binding site; the sequence is ARTGTGKT. A Phosphothreonine modification is found at Thr368. The DEAD box signature appears at 411–414; sequence DEVD. The 145-residue stretch at 501-645 folds into the Helicase C-terminal domain; the sequence is DVIRVYSGHQ…GVPSATEIIK (145 aa). Ser639 carries the phosphoserine modification. Lys672 is modified (N6-acetyllysine). Positions 783 to 851 are disordered; sequence QPELEGPPDG…KRSFSKAFGQ (69 aa). A run of 3 repeats spans residues 807-811, 817-823, and 829-833. The segment at 807-833 is 3 X 5 AA repeats; that stretch reads FRGQRGGSRNFRGQGQRGGSRNFRGQR. N6-acetyllysine is present on Lys847.

The protein belongs to the DEAD box helicase family. DDX21/DDX50 subfamily. In terms of assembly, homodimer; homodimerizes via its N-terminus. Found in a multi-helicase-TICAM1 complex at least composed of DHX36, DDX1, DDX21 and TICAM1; this complex exists in resting cells with or without poly(I:C) RNA ligand stimulation. Interacts (via C-terminus) with TICAM1 (via TIR domain). Interacts with DHX36 (via C-terminus); this interaction serves as bridges to TICAM1. Interacts (via C-terminus) with DDX1 (via B30.2/SPRY domain); this interaction serves as bridges to TICAM1. Component of the B-WICH complex, at least composed of SMARCA5/SNF2H, BAZ1B/WSTF, SF3B1, DEK, MYO1C, ERCC6, MYBBP1A and DDX21. Interacts with C1QBP. Interacts with JUN. Interacts with WDR46. Interacts with MCM3AP. Interacts with WDR43. Interacts with KPNA3. Interacts with GID4. Post-translationally, acetylation by CREBBP/CBP inhibits the helicase activity. Deacetylation by SIRT7 promotes the helicase activity and overcomes R-loop-mediated stalling of RNA polymerases. In terms of tissue distribution, highly expressed in liver and testis. Expressed at lower level in brain, lungs, and skeletal muscle.

It localises to the nucleus. It is found in the nucleolus. The protein localises to the nucleoplasm. The protein resides in the cytoplasm. Its subcellular location is the cytosol. It localises to the mitochondrion. It catalyses the reaction ATP + H2O = ADP + phosphate + H(+). Acetylation inhibits the helicase activity. Functionally, RNA helicase that acts as a sensor of the transcriptional status of both RNA polymerase (Pol) I and II: promotes ribosomal RNA (rRNA) processing and transcription from polymerase II (Pol II). Binds various RNAs, such as rRNAs, snoRNAs, 7SK and, at lower extent, mRNAs. In the nucleolus, localizes to rDNA locus, where it directly binds rRNAs and snoRNAs, and promotes rRNA transcription, processing and modification. Required for rRNA 2'-O-methylation, possibly by promoting the recruitment of late-acting snoRNAs SNORD56 and SNORD58 with pre-ribosomal complexes. In the nucleoplasm, binds 7SK RNA and is recruited to the promoters of Pol II-transcribed genes: acts by facilitating the release of P-TEFb from inhibitory 7SK snRNP in a manner that is dependent on its helicase activity, thereby promoting transcription of its target genes. Functions as cofactor for JUN-activated transcription: required for phosphorylation of JUN at 'Ser-77'. Can unwind double-stranded RNA (helicase) and can fold or introduce a secondary structure to a single-stranded RNA (foldase). Together with SIRT7, required to prevent R-loop-associated DNA damage and transcription-associated genomic instability: deacetylation by SIRT7 activates the helicase activity, thereby overcoming R-loop-mediated stalling of RNA polymerases. Involved in rRNA processing. May bind to specific miRNA hairpins. Component of a multi-helicase-TICAM1 complex that acts as a cytoplasmic sensor of viral double-stranded RNA (dsRNA) and plays a role in the activation of a cascade of antiviral responses including the induction of pro-inflammatory cytokines via the adapter molecule TICAM1. The chain is Nucleolar RNA helicase 2 (Ddx21) from Mus musculus (Mouse).